The primary structure comprises 374 residues: MLSKQISNLNSSSNKPKILSLFSGCGGLDLGFHQAGCETVWANDFSHWACESFRKNIGDVIVEGDIEQINPNDPTIPDCDIILGGFPCQDFSMIWKQPGLEGERGNLYKSFLRFVNAKKPKVFVAENVKGLLTANKKKAIQQIITDFENCGYYVQANVYNFAEFGVPQFRERVLIVGVRLDTGFDFRHPEPTHNETGENGLKPYVTAGQAISNIPQNASNNELLKISDKTRRMLELIPEGGNFTDIPKDHPLYVKGMISHVYRRMHRNEPSKTIIAAGGGGTWGYHFPEPRAFTNRERARLQSFPDDFEFVGSTTEVRRQIGNAVPPQGVVELAKSILPIFSDNYEKVDLHEKLVEEKEILFHDRLSKIRGGKQ.

Residues Pro-16–Asn-344 form the SAM-dependent MTase C5-type domain. Cys-88 is an active-site residue.

It belongs to the class I-like SAM-binding methyltransferase superfamily. C5-methyltransferase family.

It carries out the reaction a 2'-deoxycytidine in DNA + S-adenosyl-L-methionine = a 5-methyl-2'-deoxycytidine in DNA + S-adenosyl-L-homocysteine + H(+). In terms of biological role, a methylase, recognizes the double-stranded sequence 5'-GCSGC-3', methylates C-5 on both strands, and protects the DNA from cleavage by the NgoFVII endonuclease. This is Type II methyltransferase M.NgoFVII (ngoFVIIM) from Neisseria gonorrhoeae.